Consider the following 334-residue polypeptide: MVGREKELSIHFVPGCCQLVEEEVNIPSRRVLITGATGLLGRAVYKEFQQSNWHAVGCGFRRARPKFEQVNLLDSEAVHHLIHDFQPHVIVHCAAERRPDVVESQPDAASQLNVGASGNLAKEAAAIGAFLIYISSDYVFDGTNPPYTEEDIPSPLNLYGKTKLDGEKAVLENNLGAAVLRIPVLYGEVEKLEESAVTVMFDKVQFSNKSANMDHWQQRFPTHVKDVASVCRQLAEKRMLDPSIKGTFHWSGNEQMTKYEMACAIADAFNLPSSHLRPITDSPVIGAQRPKNAQLDCSKLETLGIGQRTPFRIGIKESLWPFLIDKRWRQTVFH.

NADP(+)-binding positions include 37–40 (TGLL), 60–62 (FRR), 71–72 (NL), C93, R97, Y159, and L185. The residue at position 309 (T309) is a Phosphothreonine. Residues 319–334 (LWPFLIDKRWRQTVFH) are required for interaction with MAT2A.

This sequence belongs to the dTDP-4-dehydrorhamnose reductase family. MAT2B subfamily. As to quaternary structure, heterotrimer; composed of a catalytic MAT2A homodimer that binds one regulatory MAT2B chain. Heterohexamer; composed of a central, catalytic MAT2A homotetramer flanked on either side by a regulatory MAT2B chain. NADP binding increases the affinity for MAT2A.

Its pathway is amino-acid biosynthesis; S-adenosyl-L-methionine biosynthesis; S-adenosyl-L-methionine from L-methionine: step 1/1. Functionally, regulatory subunit of S-adenosylmethionine synthetase 2, an enzyme that catalyzes the formation of S-adenosylmethionine from methionine and ATP. Regulates MAT2A catalytic activity by changing its kinetic properties, increasing its affinity for L-methionine. Can bind NADP (in vitro). This is Methionine adenosyltransferase 2 subunit beta (Mat2b) from Rattus norvegicus (Rat).